We begin with the raw amino-acid sequence, 678 residues long: Glycine--tRNA ligase beta subunit (678 aa).

The protein belongs to the class-II aminoacyl-tRNA synthetase family. In terms of assembly, tetramer of two alpha and two beta subunits.

The protein localises to the cytoplasm. The enzyme catalyses tRNA(Gly) + glycine + ATP = glycyl-tRNA(Gly) + AMP + diphosphate. This chain is Glycine--tRNA ligase beta subunit, found in Sulfurihydrogenibium sp. (strain YO3AOP1).